The chain runs to 489 residues: Dipeptide and tripeptide permease B (489 aa).

Over 1–27 the chain is Cytoplasmic; the sequence is MNKPASIGLLQQPKPFFMIFFVELWER. Residues 28–48 traverse the membrane as a helical segment; the sequence is FGYYGVQGILAVYFVHKLGFS. Residues 49–52 are Periplasmic-facing; it reads QEQA. Residues 53-73 form a helical membrane-spanning segment; it reads FTTFGAFAALVYGLIAIGGYV. The Cytoplasmic segment spans residues 74 to 82; that stretch reads GDHLLGTKR. A helical transmembrane segment spans residues 83-103; that stretch reads TIVLGAIVLTVGYFMTGLSIL. At 104–106 the chain is on the periplasmic side; it reads KPE. The helical transmembrane segment at 107-127 threads the bilayer; the sequence is LIFYALGTIAVGNGLFKANPA. Topologically, residues 128 to 146 are cytoplasmic; sequence SLLSKCYPPKDPRLDGAFT. Residues 147-167 traverse the membrane as a helical segment; the sequence is LFYMSINIGSLFSLAIAPVIA. Topologically, residues 168-171 are periplasmic; it reads EKFG. Residues 172–192 form a helical membrane-spanning segment; that stretch reads YAVTYNICGIGLIIALLVYVL. Residues 193-212 lie on the Cytoplasmic side of the membrane; the sequence is YRNTVRNIGSEPDHRPINYK. Helical transmembrane passes span 213-233 and 234-254; these read NLLL…WLMH and NVKI…FIFF. Over 255-267 the chain is Cytoplasmic; sequence REAFKQDKVGRNK. A helical transmembrane segment spans residues 268-288; the sequence is MFVAFILMLQAIVFFILYAQM. Residues 289 to 311 are Periplasmic-facing; that stretch reads PTSLNFFAINNVHHQLLGFNINP. The helical transmembrane segment at 312–332 threads the bilayer; that stretch reads VSFQALNPFWIVVASPILAAL. Over 333-350 the chain is Cytoplasmic; it reads YTHWGSRSKDLTMPAKFT. A helical membrane pass occupies residues 351–371; sequence VGMFLCSLGFLTAAAAGLWFA. Residues 372–375 lie on the Periplasmic side of the membrane; the sequence is DEQG. A helical membrane pass occupies residues 376 to 396; it reads LTSPWFIVLVYLFQSLGELMI. Over 397–419 the chain is Cytoplasmic; that stretch reads SALGLAMVAALVPQYLMGFILGM. Residues 420–440 form a helical membrane-spanning segment; it reads WYLTQATSFLLGGYVAAFTAI. The Periplasmic segment spans residues 441 to 456; the sequence is PEGITDPLETLPVYTN. A helical transmembrane segment spans residues 457–477; sequence VFGKIGITTFIVAIIMAITVP. Topologically, residues 478–489 are cytoplasmic; that stretch reads LLNRMMNGKQKA.

The protein belongs to the major facilitator superfamily. Proton-dependent oligopeptide transporter (POT/PTR) (TC 2.A.17) family. DtpB subfamily.

The protein resides in the cell inner membrane. Proton-dependent permease that transports di- and tripeptides. The sequence is that of Dipeptide and tripeptide permease B from Photorhabdus asymbiotica subsp. asymbiotica (strain ATCC 43949 / 3105-77) (Xenorhabdus luminescens (strain 2)).